The primary structure comprises 827 residues: Disintegrin and metalloproteinase domain-containing protein 17 (827 aa).

Positions 1–17 (MRQRLLFLTTLVPFVLA) are cleaved as a signal peptide. A propeptide spanning residues 18-214 (PRPPEEPGSG…SEEFVRRVKR (197 aa)) is cleaved from the precursor. Asn-157 carries an N-linked (GlcNAc...) asparagine glycan. The Cysteine switch motif lies at 182-189 (KVCGYLNA). A Zn(2+)-binding site is contributed by Cys-184. Topologically, residues 215–671 (RAEPNPLKNT…NTFGKFLADN (457 aa)) are extracellular. The Peptidase M12B domain occupies 223–474 (NTCKLLVVAD…KAQECFQERS (252 aa)). Cystine bridges form between Cys-225-Cys-333, Cys-365-Cys-469, and Cys-423-Cys-453. An N-linked (GlcNAc...) asparagine glycan is attached at Asn-264. Zn(2+) is bound at residue His-405. Glu-406 is an active-site residue. Residues His-409 and His-415 each contribute to the Zn(2+) site. Residues Asn-452, Asn-498, Asn-539, and Asn-551 are each glycosylated (N-linked (GlcNAc...) asparagine). The Disintegrin domain occupies 475-563 (NKVCGNSRVD…ECPPPGDAED (89 aa)). 4 cysteine pairs are disulfide-bonded: Cys-534–Cys-555, Cys-573–Cys-582, Cys-578–Cys-591, and Cys-593–Cys-600. The interval 603-671 (CCRNLSGPCV…NTFGKFLADN (69 aa)) is crambin-like. Residue Asn-606 is glycosylated (N-linked (GlcNAc...) asparagine). Residues 672-692 (IVGSVLVFSLIFWIPFSILVH) traverse the membrane as a helical segment. Residues 693-827 (CVDKKLDKQY…SRVDSKETEC (135 aa)) lie on the Cytoplasmic side of the membrane. An SH3-binding motif is present at residues 731-738 (PAPQTPGR). At Thr-735 the chain carries Phosphothreonine; by MAPK14. Phosphothreonine is present on Thr-764. Positions 766–827 (QEDPSTDSHV…SRVDSKETEC (62 aa)) are disordered. A Phosphoserine modification is found at Ser-770. Basic and acidic residues-rich tracts occupy residues 771-784 (TDSH…EKDP), 794-810 (SFED…EKAA), and 818-827 (SRVDSKETEC). Phosphoserine is present on residues Ser-794 and Ser-822.

Interacts with MAD2L1, MAPK14 and MUC1. Interacts with iRhom1/RHBDF1 and iRhom2/RHBDF2. Interacts with FRMD8 via its interaction with iRhom1/RHBDF1 and iRhom2/RHBDF2. Interacts with TSPAN8. It depends on Zn(2+) as a cofactor. In terms of processing, the precursor is cleaved by a furin endopeptidase. Phosphorylated. Stimulation by growth factor or phorbol 12-myristate 13-acetate induces phosphorylation of Ser-822 but decreases phosphorylation of Ser-794. Phosphorylation at Thr-735 by MAPK14 is required for ADAM17-mediated ectodomain shedding.

Its subcellular location is the membrane. The catalysed reaction is Narrow endopeptidase specificity. Cleaves Pro-Leu-Ala-Gln-Ala-|-Val-Arg-Ser-Ser-Ser in the membrane-bound, 26-kDa form of tumor necrosis factor alpha (TNFalpha). Similarly cleaves other membrane-anchored, cell-surface proteins to 'shed' the extracellular domains.. Functionally, transmembrane metalloprotease which mediates the ectodomain shedding of a myriad of transmembrane proteins including adhesion proteins, growth factor precursors and cytokines important for inflammation and immunity. Cleaves the membrane-bound precursor of TNF-alpha to its mature soluble form. Responsible for the proteolytical release of soluble JAM3 from endothelial cells surface. Responsible for the proteolytic release of several other cell-surface proteins, including p75 TNF-receptor, interleukin 1 receptor type II, p55 TNF-receptor, transforming growth factor-alpha, L-selectin, growth hormone receptor, MUC1 and the amyloid precursor protein. Acts as an activator of Notch pathway by mediating cleavage of Notch, generating the membrane-associated intermediate fragment called Notch extracellular truncation (NEXT). Plays a role in the proteolytic processing of ACE2. Plays a role in hemostasis through shedding of GP1BA, the platelet glycoprotein Ib alpha chain. Mediates the proteolytic cleavage of LAG3, leading to release the secreted form of LAG3. Mediates the proteolytic cleavage of IL6R, leading to the release of secreted form of IL6R. Mediates the proteolytic cleavage and shedding of FCGR3A upon NK cell stimulation, a mechanism that allows for increased NK cell motility and detachment from opsonized target cells. Cleaves TREM2, resulting in shedding of the TREM2 ectodomain. This chain is Disintegrin and metalloproteinase domain-containing protein 17 (Adam17), found in Rattus norvegicus (Rat).